A 638-amino-acid chain; its full sequence is Chaperone protein DnaK (638 aa).

The residue at position 198 (Thr-198) is a Phosphothreonine; by autocatalysis. Residues Gln-602–Lys-638 form a disordered region. The span at Asp-624–Lys-638 shows a compositional bias: acidic residues.

Belongs to the heat shock protein 70 family.

Its function is as follows. Acts as a chaperone. In Shewanella denitrificans (strain OS217 / ATCC BAA-1090 / DSM 15013), this protein is Chaperone protein DnaK.